Here is a 371-residue protein sequence, read N- to C-terminus: tRNA-specific 2-thiouridylase MnmA (371 aa).

ATP contacts are provided by residues 12–19 (GMSGGVDS) and Met-38. Positions 98–100 (NPD) are interaction with target base in tRNA. Cys-103 acts as the Nucleophile in catalysis. Residues Cys-103 and Cys-200 are joined by a disulfide bond. Gly-127 contributes to the ATP binding site. Residues 150 to 152 (KDQ) form an interaction with tRNA region. Cys-200 acts as the Cysteine persulfide intermediate in catalysis. The tract at residues 308 to 309 (RY) is interaction with tRNA.

It belongs to the MnmA/TRMU family.

It is found in the cytoplasm. It catalyses the reaction S-sulfanyl-L-cysteinyl-[protein] + uridine(34) in tRNA + AH2 + ATP = 2-thiouridine(34) in tRNA + L-cysteinyl-[protein] + A + AMP + diphosphate + H(+). Functionally, catalyzes the 2-thiolation of uridine at the wobble position (U34) of tRNA, leading to the formation of s(2)U34. The chain is tRNA-specific 2-thiouridylase MnmA from Oceanobacillus iheyensis (strain DSM 14371 / CIP 107618 / JCM 11309 / KCTC 3954 / HTE831).